The chain runs to 235 residues: Heme oxygenase (235 aa).

Position 19 (His19) interacts with heme b.

This sequence belongs to the heme oxygenase family.

Its subcellular location is the plastid. It is found in the chloroplast. It carries out the reaction heme b + 3 reduced [NADPH--hemoprotein reductase] + 3 O2 = biliverdin IXalpha + CO + Fe(2+) + 3 oxidized [NADPH--hemoprotein reductase] + 3 H2O + H(+). Catalyzes the opening of the heme ring with the release of iron. Key enzyme in the synthesis of the chromophoric part of the photosynthetic antennae. The protein is Heme oxygenase (pbsA) of Rhodella violacea (Red alga).